The chain runs to 875 residues: Agglutinin-like protein 4 (875 aa).

Residues 1 to 17 (MLLQFLLLSLCVSVATA) form the signal peptide. 4 cysteine pairs are disulfide-bonded: cysteine 73–cysteine 150, cysteine 96–cysteine 112, cysteine 205–cysteine 298, and cysteine 227–cysteine 256. ALS repeat units follow at residues 365–396 (TTITTSYVGVTTSYSTKTAPIGETATVIVDVP), 401–432 (TTVTSEWTGTITTTTTRTNPTDSIDTVVVQVP), 438–469 (VTTTEYWSQSYATTTTVTAPPGGTDSVIIREP), and 474–502 (VTTTEYWSQSYATTLTITAPPGGTNSVII). N-linked (GlcNAc...) asparagine glycosylation is present at asparagine 542. Disordered regions lie at residues 546 to 580 (THLPSSSSKPVDIPSSDVVTSTNDNSLTSLTGSEN) and 619 to 837 (TTII…LSQQ). Low complexity predominate over residues 549-578 (PSSSSKPVDIPSSDVVTSTNDNSLTSLTGS). A glycan (N-linked (GlcNAc...) asparagine) is linked at asparagine 626. Positions 627 to 641 (GSGKSKSGELSSTGS) are enriched in low complexity. Over residues 674 to 715 (STETQTTNNVPGSPNIPATGTTDIRESTTVSHTVTGNGNTGV) the composition is skewed to polar residues. Residues 722–746 (ALTTSTSLTGATNSATNPSHETGVN) are compositionally biased toward low complexity. Over residues 755-764 (IVTPPSSATA) the composition is skewed to polar residues. N-linked (GlcNAc...) asparagine glycosylation is found at asparagine 789 and asparagine 811. 2 stretches are compositionally biased toward low complexity: residues 789–816 (NGSTATTNIQGGNNEPGNQPGTNTTGEP) and 827–837 (SISQPTTLSQQ). A lipid anchor (GPI-anchor amidated aspartate) is attached at aspartate 852. A propeptide spans 853–875 (GSGSIVQHSAWLYVLLTAISIFF) (removed in mature form).

Belongs to the ALS family. In terms of processing, N-glycosylated and O-glycosylated.

The protein localises to the cell membrane. The protein resides in the secreted. It is found in the cell wall. In terms of biological role, cell surface adhesion protein which mediates both yeast-to-host tissue adherence and yeast aggregation. Plays an important role in the pathogenesis of C.albicans infections. This chain is Agglutinin-like protein 4 (ALS4), found in Candida albicans (Yeast).